Here is a 115-residue protein sequence, read N- to C-terminus: Large ribosomal subunit protein bL20 (115 aa).

The protein belongs to the bacterial ribosomal protein bL20 family.

Functionally, binds directly to 23S ribosomal RNA and is necessary for the in vitro assembly process of the 50S ribosomal subunit. It is not involved in the protein synthesizing functions of that subunit. The protein is Large ribosomal subunit protein bL20 of Parasynechococcus marenigrum (strain WH8102).